The primary structure comprises 266 residues: Proteasome subunit alpha type-1 (266 aa).

The tract at residues 235–266 (DGFKTRPEDIPAVADNEEDDDELHEQPPDVEE) is disordered. Acidic residues predominate over residues 249–266 (DNEEDDDELHEQPPDVEE).

The protein belongs to the peptidase T1A family. The 26S proteasome consists of a 20S proteasome core and two 19S regulatory subunits. The 20S proteasome core is composed of 28 subunits that are arranged in four stacked rings, resulting in a barrel-shaped structure. The two end rings are each formed by seven alpha subunits, and the two central rings are each formed by seven beta subunits. The catalytic chamber with the active sites is on the inside of the barrel.

It localises to the cytoplasm. The protein resides in the nucleus. The proteasome is a multicatalytic proteinase complex which is characterized by its ability to cleave peptides with Arg, Phe, Tyr, Leu, and Glu adjacent to the leaving group at neutral or slightly basic pH. The proteasome has an ATP-dependent proteolytic activity. This chain is Proteasome subunit alpha type-1, found in Trypanosoma brucei rhodesiense.